Consider the following 223-residue polypeptide: RNA-free ribonuclease P (223 aa).

This sequence belongs to the HARP family.

It carries out the reaction Endonucleolytic cleavage of RNA, removing 5'-extranucleotides from tRNA precursor.. RNA-free RNase P that catalyzes the removal of the 5'-leader sequence from pre-tRNA to produce the mature 5'-terminus. This Methanococcus maripaludis (strain C5 / ATCC BAA-1333) protein is RNA-free ribonuclease P.